Here is a 561-residue protein sequence, read N- to C-terminus: Putative transport protein YbjL (561 aa).

The next 5 membrane-spanning stretches (helical) occupy residues 8 to 28, 32 to 52, 66 to 86, 94 to 114, and 158 to 178; these read LLNG…LCLG, LGSI…LLGQ, FMLF…SIFF, MLAL…GKLF, and NLSL…IVGA. 2 RCK C-terminal domains span residues 200–288 and 292–373; these read RGLD…SFRN and VFDR…RIGF. Transmembrane regions (helical) follow at residues 383–403, 406–426, 451–471, 475–495, and 540–560; these read LLAF…TFQF, FSFG…LGFM, VFMA…LGAI, MLIA…LFGA, and AIAN…WPGL.

The protein belongs to the AAE transporter (TC 2.A.81) family. YbjL subfamily.

It localises to the cell membrane. The sequence is that of Putative transport protein YbjL from Shigella boydii serotype 4 (strain Sb227).